Consider the following 116-residue polypeptide: NADH-ubiquinone oxidoreductase chain 3 (116 aa).

Transmembrane regions (helical) follow at residues 6-26 (FMLL…FWLA), 56-76 (FFLV…LLPL), and 85-105 (PLLT…GLVY).

Belongs to the complex I subunit 3 family.

The protein resides in the mitochondrion membrane. The enzyme catalyses a ubiquinone + NADH + 5 H(+)(in) = a ubiquinol + NAD(+) + 4 H(+)(out). Its function is as follows. Core subunit of the mitochondrial membrane respiratory chain NADH dehydrogenase (Complex I) that is believed to belong to the minimal assembly required for catalysis. Complex I functions in the transfer of electrons from NADH to the respiratory chain. The immediate electron acceptor for the enzyme is believed to be ubiquinone. This is NADH-ubiquinone oxidoreductase chain 3 (MT-ND3) from Struthio camelus (Common ostrich).